A 603-amino-acid chain; its full sequence is Sesquiterpene synthase Cad (603 aa).

The segment covering 1–13 (MAEVGLSQNSYAS) has biased composition (polar residues). Positions 1 to 23 (MAEVGLSQNSYASANHDKKSEQQ) are disordered. Mg(2+) is bound by residues aspartate 357, aspartate 361, aspartate 498, and glutamate 506. Residues 357–361 (DDIFD) carry the DDXXD motif motif.

It belongs to the terpene synthase family. Tpsa subfamily. Mg(2+) serves as cofactor. Mn(2+) is required as a cofactor. As to expression, mostly expressed in leaves and, to a lower extent, in stems and xylem.

The catalysed reaction is (2E,6E)-farnesyl diphosphate = beta-cadinene + diphosphate. It functions in the pathway secondary metabolite biosynthesis; terpenoid biosynthesis. Its function is as follows. Sesquiterpene synthase involved in the biosynthesis of volatile compounds. Mediates the conversion of (2E,6E)-farnesyl diphosphate (FPP) into beta-cadinene. Not active with geranyl diphosphate (GPP) and geranylgeranyl diphosphate (GGPP) as substrates. The protein is Sesquiterpene synthase Cad of Chamaecyparis formosensis (Formosan cypress).